An 805-amino-acid chain; its full sequence is FAD-dependent monooxygenase verC1 (805 aa).

The N-terminal stretch at 1–20 is a signal peptide; that stretch reads MTFRVIIVGGGVAGLTLASA. Positions 32, 46, and 107 each coordinate FAD. Asn-132 carries an N-linked (GlcNAc...) asparagine glycan. Residue Tyr-214 is part of the active site. FAD contacts are provided by Asp-306 and Ala-319. Transmembrane regions (helical) follow at residues 551-571, 604-624, 632-652, 671-691, 703-723, 726-746, and 761-781; these read ALTM…AGLG, IAVL…AFFW, SWLF…YLFS, LPVI…FWMW, VFFP…VCAI, WDML…IWDL, and IYGV…LGWL.

The protein belongs to the paxM FAD-dependent monooxygenase family.

It localises to the membrane. Its pathway is secondary metabolite biosynthesis; terpenoid biosynthesis. It participates in mycotoxin biosynthesis. FAD-dependent monooxygenase; part of the gene cluster that mediates the biosynthesis of the neurotoxin verrucosidin, a methylated alpha-pyrone polyketide that inhibits oxidative phosphorylation in mitochondria and thereby causes neurological diseases. The carbon backbone of verrucosidin is synthesized by the HR-PKS verA, and further modified by the other verrucodidin cluster enzymes. This is FAD-dependent monooxygenase verC1 from Penicillium polonicum.